Reading from the N-terminus, the 487-residue chain is MIYHDLRDFVAQLEKMGELKRIATEVDPRLEMTEIADRVLRAGGPALLFEHPKGHRVPVLANLFGTVKRVALGMGEDDPARLREVGKLLAYLKEPEPPKGLRDAWDKWPVLKQVLNMAPKEVRSAPCQEMVWEGKDVDLSRLPIQHCWPGDVAPLITWGLTVTRGPHKKRQNLGIYRQQVIGPNKLIMRWLAHRGGALDFREHQQAHPGEAFPVAVALGADPATILGAVTPVPDTLSEYQFAGLLRGAKTEVVRCLGNTLQVPASSEIVLEGVIHPEETALEGPYGDHTGYYNEQETFPVFTVERITMRRDPIYHSTYTGKPPDEPAILGVALNEVFVPLLQKQFPEIVDFYLPPEGCSYRMAVVSMKKAYPGHAKRVMFGVWSFLRQFMYTKFILVTDDDVDVRDWKEVMWALTTRVDPARDTLLVENTPIDYLDFASPVSGLGSKMGIDATNKWPGETQREWGTPITMDAAVKARVDAIWQDLGL.

Mn(2+) is bound at residue asparagine 172. Prenylated FMN is bound by residues 175–177 (IYR), 189–191 (RWL), and 194–195 (RG). Glutamate 238 is a Mn(2+) binding site. The active-site Proton donor is aspartate 287.

The protein belongs to the UbiD family. Homohexamer. Requires prenylated FMN as cofactor. The cofactor is Mn(2+).

Its subcellular location is the cell membrane. The catalysed reaction is a 4-hydroxy-3-(all-trans-polyprenyl)benzoate + H(+) = a 2-(all-trans-polyprenyl)phenol + CO2. It participates in cofactor biosynthesis; ubiquinone biosynthesis. Functionally, catalyzes the decarboxylation of 3-octaprenyl-4-hydroxy benzoate to 2-octaprenylphenol, an intermediate step in ubiquinone biosynthesis. This is 3-octaprenyl-4-hydroxybenzoate carboxy-lyase from Thiobacillus denitrificans (strain ATCC 25259 / T1).